Consider the following 132-residue polypeptide: Small ribosomal subunit protein uS11 (132 aa).

Belongs to the universal ribosomal protein uS11 family. In terms of assembly, part of the 30S ribosomal subunit. Interacts with proteins S7 and S18. Binds to IF-3.

Located on the platform of the 30S subunit, it bridges several disparate RNA helices of the 16S rRNA. Forms part of the Shine-Dalgarno cleft in the 70S ribosome. The sequence is that of Small ribosomal subunit protein uS11 from Clostridium kluyveri (strain NBRC 12016).